A 415-amino-acid polypeptide reads, in one-letter code: Multidrug resistance protein MdtA (415 aa).

Residues 1 to 21 (MKSTVKKRGWVIAGIVVVALA) form the signal peptide. The disordered stretch occupies residues 387 to 415 (AQTAADAAKPERGERAPTDSARAAKGARS). Residues 394 to 403 (AKPERGERAP) show a composition bias toward basic and acidic residues.

Belongs to the membrane fusion protein (MFP) (TC 8.A.1) family. Part of a tripartite efflux system composed of MdtA, MdtB and MdtC.

Its subcellular location is the cell inner membrane. The sequence is that of Multidrug resistance protein MdtA from Cronobacter turicensis (strain DSM 18703 / CCUG 55852 / LMG 23827 / z3032).